A 244-amino-acid chain; its full sequence is 2,5-diamino-6-ribosylamino-4(3H)-pyrimidinone 5'-phosphate reductase (244 aa).

Residues Thr74, Asp78, Ile160, and 183 to 187 each bind NADP(+); that span reads GSHVI.

Belongs to the HTP reductase family. In terms of assembly, homodimer.

It carries out the reaction 2,5-diamino-6-(1-D-ribitylamino)pyrimidin-4(3H)-one 5'-phosphate + NADP(+) = 2,5-diamino-6-(1-D-ribosylamino)pyrimidin-4(3H)-one 5'-phosphate + NADPH + H(+). The enzyme catalyses 2,5-diamino-6-(1-D-ribitylamino)pyrimidin-4(3H)-one 5'-phosphate + NAD(+) = 2,5-diamino-6-(1-D-ribosylamino)pyrimidin-4(3H)-one 5'-phosphate + NADH + H(+). The protein operates within cofactor biosynthesis; riboflavin biosynthesis. In terms of biological role, catalyzes an early step in riboflavin biosynthesis, the NADPH-dependent reduction of the ribose side chain of 2,5-diamino-6-ribosylamino-4(3H)-pyrimidinone 5'-phosphate, yielding 2,5-diamino-6-ribitylamino-4(3H)-pyrimidinone 5'-phosphate. The sequence is that of 2,5-diamino-6-ribosylamino-4(3H)-pyrimidinone 5'-phosphate reductase (RIB7) from Candida glabrata (strain ATCC 2001 / BCRC 20586 / JCM 3761 / NBRC 0622 / NRRL Y-65 / CBS 138) (Yeast).